Consider the following 444-residue polypeptide: Xaa-Pro dipeptidase (444 aa).

Mn(2+)-binding residues include D247, D258, H340, E385, and E424.

This sequence belongs to the peptidase M24B family. Bacterial-type prolidase subfamily. The cofactor is Mn(2+).

It carries out the reaction Xaa-L-Pro dipeptide + H2O = an L-alpha-amino acid + L-proline. Splits dipeptides with a prolyl residue in the C-terminal position. The sequence is that of Xaa-Pro dipeptidase from Photorhabdus laumondii subsp. laumondii (strain DSM 15139 / CIP 105565 / TT01) (Photorhabdus luminescens subsp. laumondii).